The sequence spans 256 residues: Ribonuclease 3 (256 aa).

Residues 3–125 enclose the RNase III domain; it reads LDALQQRLGY…IFGAVFLDGG (123 aa). Glu38 lines the Mg(2+) pocket. Asp42 is an active-site residue. Mg(2+)-binding residues include Asp111 and Glu114. Residue Glu114 is part of the active site. Residues 152–222 enclose the DRBM domain; sequence DAKTLLQEYL…AKLALDEAHR (71 aa). The disordered stretch occupies residues 226–256; the sequence is QLVKRSRAERTGKTRKQATPPDPQLSLRLKE.

It belongs to the ribonuclease III family. As to quaternary structure, homodimer. The cofactor is Mg(2+).

The protein localises to the cytoplasm. The catalysed reaction is Endonucleolytic cleavage to 5'-phosphomonoester.. In terms of biological role, digests double-stranded RNA. Involved in the processing of primary rRNA transcript to yield the immediate precursors to the large and small rRNAs (23S and 16S). Processes some mRNAs, and tRNAs when they are encoded in the rRNA operon. Processes pre-crRNA and tracrRNA of type II CRISPR loci if present in the organism. This chain is Ribonuclease 3, found in Ralstonia pickettii (strain 12J).